The sequence spans 263 residues: tRNA (guanine-N(7)-)-methyltransferase (263 aa).

The tract at residues 1–39 is disordered; it reads MVHHGQMHAQPGVGLRPDTPVASGQLPSTSIRSRRSGIS. 4 residues coordinate S-adenosyl-L-methionine: Glu-82, Asp-107, Asn-136, and Asp-159. The active site involves Asp-159. Substrate-binding positions include Lys-163, Asp-195, and 232-235; that span reads TKYE.

The protein belongs to the class I-like SAM-binding methyltransferase superfamily. TrmB family.

It carries out the reaction guanosine(46) in tRNA + S-adenosyl-L-methionine = N(7)-methylguanosine(46) in tRNA + S-adenosyl-L-homocysteine. Its pathway is tRNA modification; N(7)-methylguanine-tRNA biosynthesis. Catalyzes the formation of N(7)-methylguanine at position 46 (m7G46) in tRNA. The protein is tRNA (guanine-N(7)-)-methyltransferase of Mycobacterium bovis (strain ATCC BAA-935 / AF2122/97).